Here is a 313-residue protein sequence, read N- to C-terminus: Potassium channel subfamily K member 6 (313 aa).

The Cytoplasmic segment spans residues 1-4 (MRRG). A helical membrane pass occupies residues 5-25 (ALLAGALAAYAAYLVLGALLV). Asn-79 and Asn-85 each carry an N-linked (GlcNAc...) asparagine glycan. The segment at residues 90-115 (AWDFASALFFASTLITTVGYGYTTPL) is an intramembrane region (pore-forming). Thr-106, Val-107, Gly-108, and Tyr-109 together coordinate K(+). Positions 106-111 (TVGYGY) are selectivity filter 1. A helical membrane pass occupies residues 121–141 (AFSIAFALLGVPTTMLLLTAS). Residues 142–172 (AQRLSLLLTHVPLSWLSMRWGWDPRRAACWH) lie on the Cytoplasmic side of the membrane. Residues 173-193 (LVALLGVVVTVCFLVPAVIFA) traverse the membrane as a helical segment. Positions 199–223 (WSFLDAFYFCFISLSTIGLGDYVPG) form an intramembrane region, pore-forming. 3 residues coordinate K(+): Thr-214, Ile-215, and Gly-216. A selectivity filter 2 region spans residues 214-219 (TIGLGD). A helical transmembrane segment spans residues 236 to 256 (VLVTVYLFLGLVAMVLVLQTF). The Cytoplasmic portion of the chain corresponds to 257-313 (RHVSDLHGLTELILLPPPCPASFNADEDDRVDILGPQPESHQQLSASSHTDYASIPR). The short motif at 282 to 290 (DEDDRVDIL) is the Lysosomal targeting signal element. Residues 288–313 (DILGPQPESHQQLSASSHTDYASIPR) form a disordered region. The segment covering 295–307 (ESHQQLSASSHTD) has biased composition (polar residues). The short motif at 308–312 (YASIP) is the Lysosomal targeting signal element.

This sequence belongs to the two pore domain potassium channel (TC 1.A.1.8) family. In terms of assembly, homodimer; disulfide-linked. In terms of processing, N-glycosylation is necessary for targeting to lysosomes. As to expression, widespread expression, detected in all tissues tested except for skeletal muscle. Strongest expression in placenta, pancreas, heart, colon and spleen, lower levels detected in peripheral blood leukocytes, lung, liver, kidney and thymus. Lowest expression detected in brain.

Its subcellular location is the late endosome membrane. The protein resides in the lysosome membrane. The enzyme catalyses K(+)(in) = K(+)(out). Its function is as follows. K(+) channel that conducts outward rectifying currents at the membranes of the endolysosomal system. Active in lysosomes where it regulates lysosome numbers and size. In macrophages, enables K(+) efflux coupled to ATP-induced NLRP3 inflammasome activation upon bacterial infection. Cooperates with ATP-gated P2RX7 channels to activate NLRP3 inflammasome, with P2RX7 conducting Ca(2+) and Na(+) influx that sets the membrane potential for K(+) efflux. In terms of biological role, does not display channel activity. The chain is Potassium channel subfamily K member 6 from Homo sapiens (Human).